The chain runs to 297 residues: Giardin subunit alpha-6 (297 aa).

Annexin repeat units follow at residues 3 to 72, 74 to 146, 153 to 222, and 226 to 295; these read TTVQ…AYLW, KPGD…HWIL, FDID…AAHY, and HPAR…ILWR.

The protein belongs to the annexin family. Giardin subunit alpha subfamily.

It localises to the cytoplasm. Its subcellular location is the cytoskeleton. In terms of biological role, giardins are involved in parasite attachment to the intestinal mucosa and in the cytoskeletal disassembly and reassembly that marks the transition from infectious trophozoite to transmissible cyst. They may interact with other cytoskeletal proteins such as microtubules in the microribbons or crossbridges, to maintain the integrity of the ventral disk. This is Giardin subunit alpha-6 from Giardia intestinalis (Giardia lamblia).